Reading from the N-terminus, the 180-residue chain is ATP synthase subunit b (180 aa).

A helical membrane pass occupies residues 15–35 (LIPEVPELVIGLLAFAIVFFV).

Belongs to the ATPase B chain family. As to quaternary structure, F-type ATPases have 2 components, F(1) - the catalytic core - and F(0) - the membrane proton channel. F(1) has five subunits: alpha(3), beta(3), gamma(1), delta(1), epsilon(1). F(0) has three main subunits: a(1), b(2) and c(10-14). The alpha and beta chains form an alternating ring which encloses part of the gamma chain. F(1) is attached to F(0) by a central stalk formed by the gamma and epsilon chains, while a peripheral stalk is formed by the delta and b chains.

Its subcellular location is the cell membrane. Functionally, f(1)F(0) ATP synthase produces ATP from ADP in the presence of a proton or sodium gradient. F-type ATPases consist of two structural domains, F(1) containing the extramembraneous catalytic core and F(0) containing the membrane proton channel, linked together by a central stalk and a peripheral stalk. During catalysis, ATP synthesis in the catalytic domain of F(1) is coupled via a rotary mechanism of the central stalk subunits to proton translocation. Its function is as follows. Component of the F(0) channel, it forms part of the peripheral stalk, linking F(1) to F(0). This chain is ATP synthase subunit b, found in Streptomyces avermitilis (strain ATCC 31267 / DSM 46492 / JCM 5070 / NBRC 14893 / NCIMB 12804 / NRRL 8165 / MA-4680).